Reading from the N-terminus, the 424-residue chain is Probable methyltransferase EP424R (424 aa).

Positions 103–315 (QIVTNAWLKM…TYIVGKNRLR (213 aa)) constitute an Adrift-type SAM-dependent 2'-O-MTase domain. S-adenosyl-L-methionine-binding residues include glycine 135 and aspartate 228. The active-site Proton acceptor is the lysine 268.

It localises to the virion. This Ornithodoros (relapsing fever ticks) protein is Probable methyltransferase EP424R.